The following is a 188-amino-acid chain: MSSTEKRLLKEYRAVKKELTEKRSPIHDTGIVDLHPLEDGLFRWSAVIRGPDQSPFEDALWKLEIDIPTNYPLDPPKIKFVVFGEEKIRQLQRKTSSGARKVCYKMPHPNVNFKTGEICLDILQQKWSPAWTLQSALVAIVVLLANPEPLSPLNIDMANLLKCDDTTAYKDLVHYYIAKYSAYESNDV.

The UBC core domain maps to 3–182 (STEKRLLKEY…VHYYIAKYSA (180 aa)). C119 serves as the catalytic Glycyl thioester intermediate.

This sequence belongs to the ubiquitin-conjugating enzyme family.

It catalyses the reaction S-ubiquitinyl-[E1 ubiquitin-activating enzyme]-L-cysteine + [E2 ubiquitin-conjugating enzyme]-L-cysteine = [E1 ubiquitin-activating enzyme]-L-cysteine + S-ubiquitinyl-[E2 ubiquitin-conjugating enzyme]-L-cysteine.. Its pathway is protein modification; protein ubiquitination. In terms of biological role, catalyzes the covalent attachment of ubiquitin to other proteins. Essential for peroxisome biogenesis. Required for UBC4-independent ubiquitination of PEX5. The polypeptide is Ubiquitin-conjugating enzyme E2-21 kDa (PEX4) (Pichia angusta (Yeast)).